A 168-amino-acid polypeptide reads, in one-letter code: UPF0304 protein MJECS11 (168 aa).

It belongs to the UPF0304 family.

The sequence is that of UPF0304 protein MJECS11 from Methanocaldococcus jannaschii (strain ATCC 43067 / DSM 2661 / JAL-1 / JCM 10045 / NBRC 100440) (Methanococcus jannaschii).